The sequence spans 201 residues: Recombination protein RecR (201 aa).

The segment at 57–72 adopts a C4-type zinc-finger fold; that stretch reads CKYCSNFGNKDECDIC. In terms of domain architecture, Toprim spans 80-176; it reads TKLMIVTTNE…QIYRIGFGIP (97 aa).

It belongs to the RecR family.

Functionally, may play a role in DNA repair. It seems to be involved in an RecBC-independent recombinational process of DNA repair. It may act with RecF and RecO. The sequence is that of Recombination protein RecR from Ureaplasma urealyticum serovar 10 (strain ATCC 33699 / Western).